The chain runs to 414 residues: uncharacterized protein (414 aa).

Residues 1 to 66 lie on the Lumenal side of the membrane; that stretch reads MNPSVPKVMK…LQRISKDYLK (66 aa). Residues 20 to 51 are disordered; sequence SKEMNDTSLQLPSTTRSLSPKESNSNEDFNVD. Residues 25-51 show a composition bias toward polar residues; the sequence is DTSLQLPSTTRSLSPKESNSNEDFNVD. Residue K40 forms a Glycyl lysine isopeptide (Lys-Gly) (interchain with G-Cter in ubiquitin) linkage. The chain crosses the membrane as a helical span at residues 67-87; sequence PNIGLVLLTVSYFFNSAMVVS. The 138-residue stretch at 78-215 folds into the EamA 1 domain; it reads YFFNSAMVVS…SLLGVVLIVR (138 aa). Topologically, residues 88–106 are cytoplasmic; the sequence is TKVLENDPDDIANDRQIKP. Residues 107–127 traverse the membrane as a helical segment; that stretch reads LQILLVRMVITYIGTLIYMYI. Over 128 to 144 the chain is Lumenal; sequence NKSTISDVPFGKPEVRK. The helical transmembrane segment at 145–167 threads the bilayer; the sequence is WLVLRGCTGFFGVFGMYYSLMYL. Over 168-171 the chain is Cytoplasmic; sequence TISD. A helical membrane pass occupies residues 172–191; the sequence is AVLITFLAPSLTIFLSWVIL. Residues 192 to 199 lie on the Lumenal side of the membrane; sequence RERFTKVE. A helical transmembrane segment spans residues 200 to 220; it reads ALGSLISLLGVVLIVRPSFLF. Topologically, residues 221–241 are cytoplasmic; it reads GTPELTDSSSQIVESSDPKSR. The chain crosses the membrane as a helical span at residues 242–262; sequence LIATLVGLWGVLGMSCVYIII. Positions 253 to 379 constitute an EamA 2 domain; that stretch reads LGMSCVYIII…IISATLWVIR (127 aa). Residues 263 to 269 are Lumenal-facing; sequence RYIGKRA. A helical membrane pass occupies residues 270–290; it reads HAIMSVSYFSLITAIVSFIGI. Residues 291–307 lie on the Cytoplasmic side of the membrane; sequence NTIPSMKFQIPHSKKQW. A helical transmembrane segment spans residues 308–328; that stretch reads ILFGNLGVSGFIFQLLLTMGI. The Lumenal portion of the chain corresponds to 329-357; that stretch reads QRERAGRGSLMTYTQLLYAVFWDVALYKH. The helical transmembrane segment at 358–378 threads the bilayer; it reads WPNIWSWIGMIIIISATLWVI. At 379-414 the chain is on the cytoplasmic side; it reads RIRAANNETTAKDLTPIIDDEENSIPLTEFDLSDSK.

The protein to yeast YPL264c.

It is found in the membrane. This is an uncharacterized protein from Saccharomyces cerevisiae (strain ATCC 204508 / S288c) (Baker's yeast).